We begin with the raw amino-acid sequence, 419 residues long: E3 ubiquitin-protein ligase RNF130 (419 aa).

Positions 1 to 27 (MSGAARAGPARLAALALLTCSLWPTRA) are cleaved as a signal peptide. Residues 28–194 (DNASQEYYTA…MPPKNFSRGS (167 aa)) lie on the Extracellular side of the membrane. 6 N-linked (GlcNAc...) asparagine glycosylation sites follow: Asn-29, Asn-40, Asn-112, Asn-135, Asn-172, and Asn-189. Residues 105–176 (IALLQRGNCT…SYLEKNISVQ (72 aa)) form the PA domain. A helical transmembrane segment spans residues 195-217 (LVFVSISFIVLMIISSAWLIFYF). The Cytoplasmic portion of the chain corresponds to 218–419 (IQKIRYTNAR…SLNANEVEWF (202 aa)). The RING-type zinc-finger motif lies at 264–305 (CAVCIESYKQNDVVRVLPCKHVFHKSCVDPWLSEHCTCPMCK).

Expression is highest in liver, with lesser amounts in the lung, spleen, brain, heart, kidney and testis.

Its subcellular location is the membrane. The protein resides in the cytoplasm. It catalyses the reaction S-ubiquitinyl-[E2 ubiquitin-conjugating enzyme]-L-cysteine + [acceptor protein]-L-lysine = [E2 ubiquitin-conjugating enzyme]-L-cysteine + N(6)-ubiquitinyl-[acceptor protein]-L-lysine.. It functions in the pathway protein modification; protein ubiquitination. In terms of biological role, acts as an E3 ubiquitin-protein ligase. May have a role during the programmed cell death of hematopoietic cells. This is E3 ubiquitin-protein ligase RNF130 from Mus musculus (Mouse).